The primary structure comprises 92 residues: Small ribosomal subunit protein uS19 (92 aa).

It belongs to the universal ribosomal protein uS19 family. Part of the 30S ribosomal subunit.

Its function is as follows. Protein S19 forms a complex with S13 that binds strongly to the 16S ribosomal RNA. The sequence is that of Small ribosomal subunit protein uS19 (rpsS) from Bacillus subtilis (strain 168).